The chain runs to 293 residues: MPWIQLKLNTTGANAEELSDALMEAGAVSITFQDTHDTPVFEPLPGETRLWGDTDVIGLFDAETDMKDVVAILEQHPLLGAGFAHKIEQLEDKDWEREWMDNFHPMRFGERLWICPSWRDIPDENAVNVMLDPGLAFGTGTHPTTSLCLQWLDGLDLNGKTVIDFGCGSGILAIAALKLGAAKAIGVDIDPQAIQASRDNAERNGVSDRLELYLPKDQPDAMKADVVVANILAGPLRELAPLISVLPVEGGLLGLSGILASQAESVCDAYAELFTLDPVVEKEEWCRITGRKK.

Positions 145, 166, 188, and 230 each coordinate S-adenosyl-L-methionine.

Belongs to the methyltransferase superfamily. PrmA family.

It localises to the cytoplasm. It carries out the reaction L-lysyl-[protein] + 3 S-adenosyl-L-methionine = N(6),N(6),N(6)-trimethyl-L-lysyl-[protein] + 3 S-adenosyl-L-homocysteine + 3 H(+). Functionally, methylates ribosomal protein L11. This Salmonella arizonae (strain ATCC BAA-731 / CDC346-86 / RSK2980) protein is Ribosomal protein L11 methyltransferase.